Here is a 554-residue protein sequence, read N- to C-terminus: MFKITVFIYVLQLILPSKVHSSPVPDSDNGLREFPLSIVHINDFHARFEQTDELGGQCKPTAKCVGGYARLVTTVKKLKEEGQNTIFLNAADNYQGTLWYNLGKWNVTAYFMNLLPADAMTLGNHEFDDKIEGIVPFLEVIKTPIVVANIDDSLEPTFKGKYTKSVVLERGGRKIGIVGVIAQNTDNISSPGKLRFLDEIQSVKNESKRLREEEKVDIVIVLSHIGLDHDYDLAEQAGDYIDAIIGGHSHSFLWTGDNPPGKEKVVDAYPVEIVQTSGKKVLIVQASAFARYVGNITLYFGENNNLIRYAGAPVYLDSDVPEVPQIVEEMKAWEEFVHEKGNEIIAESRVVLSRENCRVSDCNIGNFFTDAYVHEYVTSHTGPYWTPVSVGLMNVGGIRASVDRGNITFSQLITMAPFENTVDTFDLSGKHLLEAFEHAVTVPNRLGFNGQNMLQVSGVKLVYDVTKCEGQRVVSAKIRCQKCDIPKYEPLDPEETYRIVTASFLANGGDGFTMIRDNKKNYKVGRKDYDVLINYAKYSSPITIGEEGRIRIIQ.

The N-terminal stretch at methionine 1–serine 21 is a signal peptide. 6 residues coordinate a divalent metal cation: aspartate 43, histidine 45, aspartate 92, asparagine 124, histidine 224, and histidine 248. Arginine 358, asparagine 394, arginine 399, phenylalanine 418, phenylalanine 504, and aspartate 510 together coordinate AMP.

The protein belongs to the 5'-nucleotidase family. A divalent metal cation is required as a cofactor. In terms of tissue distribution, salivary gland (at protein level).

Its subcellular location is the secreted. The catalysed reaction is a ribonucleoside 5'-triphosphate + 2 H2O = a ribonucleoside 5'-phosphate + 2 phosphate + 2 H(+). Functionally, facilitates hematophagy by inhibiting ADP-dependent platelet aggregation in the host. Cleaves adenosine triphosphate (ATP) and adenosine diphosphate (ADP) to adenosine monophosphate (AMP) and inorganic phosphate. Shows potential for antithrombotic activity. Can induce basophil activation. May reduce probing time by facilitating the speed of locating blood. The chain is Apyrase from Tabanus yao (Horsefly).